The sequence spans 99 residues: Plastocyanin (99 aa).

Residues 1–99 (LDVLLGSDDG…AGMVGKVTVN (99 aa)) form the Plastocyanin-like domain. The Cu cation site is built by H37, C84, H87, and M92.

This sequence belongs to the plastocyanin family. Requires Cu(2+) as cofactor.

The protein resides in the plastid. Its subcellular location is the chloroplast thylakoid membrane. Functionally, participates in electron transfer between P700 and the cytochrome b6-f complex in photosystem I. The sequence is that of Plastocyanin (PETE) from Mercurialis perennis (Dog's mercury).